Consider the following 225-residue polypeptide: Orotidine 5'-phosphate decarboxylase (225 aa).

Substrate is bound by residues aspartate 9, lysine 31, 58–67, threonine 115, arginine 176, glutamine 184, glycine 204, and arginine 205; that span reads DLKLHDIPNT. Lysine 60 functions as the Proton donor in the catalytic mechanism.

It belongs to the OMP decarboxylase family. Type 1 subfamily. Homodimer.

The catalysed reaction is orotidine 5'-phosphate + H(+) = UMP + CO2. The protein operates within pyrimidine metabolism; UMP biosynthesis via de novo pathway; UMP from orotate: step 2/2. In terms of biological role, catalyzes the decarboxylation of orotidine 5'-monophosphate (OMP) to uridine 5'-monophosphate (UMP). The sequence is that of Orotidine 5'-phosphate decarboxylase from Wolbachia sp. subsp. Brugia malayi (strain TRS).